The primary structure comprises 79 residues: Sulfur carrier protein TusA (79 aa).

Cysteine 17 (cysteine persulfide intermediate) is an active-site residue.

This sequence belongs to the sulfur carrier protein TusA family.

Its subcellular location is the cytoplasm. In terms of biological role, sulfur carrier protein which probably makes part of a sulfur-relay system. This chain is Sulfur carrier protein TusA, found in Actinobacillus pleuropneumoniae serotype 5b (strain L20).